The primary structure comprises 515 residues: Tripartite motif-containing protein 5 (515 aa).

Residue Ala2 is modified to N-acetylalanine. The RING-type zinc finger occupies 15 to 60 (CPICLELLTEPLSLPCGHSLCQACITANHKESMLYKEEERSCPVCR). Ser87 carries the phosphoserine modification. The B box-type zinc-finger motif lies at 92-133 (QKVDHCARHGEKLLLFCQEDSKVICWLCERSQEHRGHHTFLM). Zn(2+) contacts are provided by Cys97, His100, Cys119, and His125. The stretch at 137 to 225 (AQEYHVKLQT…LTKSETEMVQ (89 aa)) forms a coiled coil. Residues 187 to 200 (FEQLREILDWEESN) are required for interaction with GABARAP and for autophagy. Residues 283-515 (LKGMLDMFRE…VPMTLCSPSS (233 aa)) form the B30.2/SPRY domain.

Belongs to the TRIM/RBCC family. Can form homodimers and homotrimers. In addition to lower-order dimerization, also exhibits a higher-order multimerization and both low- and high-order multimerizations are essential for its restriction activity. Interacts with BTBD1 and BTBD2. Interacts with PSMC4, PSMC5, PSMD7 and HSPA8/HSC70. Interacts (via B30.2/SPRY domain) with HSPA1A/B. Interacts with PSMC2, MAP3K7/TAK1, TAB2 and TAB3. Interacts with SQSTM1. Interacts with TRIM6 and TRIM34. Interacts with ULK1 (phosphorylated form), GABARAP, GABARAPL1, GABARAPL2, MAP1LC3A, MAP1LC3C and BECN1. In terms of processing, degraded in a proteasome-independent fashion in the absence of viral infection but in a proteasome-dependent fashion following exposure to restriction sensitive virus. Autoubiquitinated in a RING finger- and UBE2D2-dependent manner. Monoubiquitinated by TRIM21. Deubiquitinated by Yersinia YopJ. Ubiquitination may not lead to proteasomal degradation.

Its subcellular location is the cytoplasm. It localises to the nucleus. The catalysed reaction is S-ubiquitinyl-[E2 ubiquitin-conjugating enzyme]-L-cysteine + [acceptor protein]-L-lysine = [E2 ubiquitin-conjugating enzyme]-L-cysteine + N(6)-ubiquitinyl-[acceptor protein]-L-lysine.. Its pathway is protein modification; protein ubiquitination. In terms of biological role, capsid-specific restriction factor that prevents infection from non-host-adapted retroviruses. Blocks viral replication early in the life cycle, after viral entry but before reverse transcription. In addition to acting as a capsid-specific restriction factor, also acts as a pattern recognition receptor that activates innate immune signaling in response to the retroviral capsid lattice. Binding to the viral capsid triggers its E3 ubiquitin ligase activity, and in concert with the heterodimeric ubiquitin conjugating enzyme complex UBE2V1-UBE2N (also known as UBC13-UEV1A complex) generates 'Lys-63'-linked polyubiquitin chains, which in turn are catalysts in the autophosphorylation of the MAP3K7/TAK1 complex (includes TAK1, TAB2, and TAB3). Activation of the MAP3K7/TAK1 complex by autophosphorylation results in the induction and expression of NF-kappa-B and MAPK-responsive inflammatory genes, thereby leading to an innate immune response in the infected cell. Restricts infection by human immunodeficiency virus type 1 (HIV-1) and N-tropic murine leukemia virus (N-MLV). Plays a role in regulating autophagy through activation of autophagy regulator BECN1 by causing its dissociation from its inhibitors BCL2 and TAB2. This Chlorocebus pygerythrus (Vervet monkey) protein is Tripartite motif-containing protein 5 (TRIM5).